Here is a 1224-residue protein sequence, read N- to C-terminus: Serine/threonine-protein kinase CST20 (1224 aa).

The segment covering 1-18 (MSILSENNPTPTSITDPN) has biased composition (polar residues). Disordered stretches follow at residues 1–378 (MSIL…TAHN) and 403–464 (TNSS…HSQE). Composition is skewed to low complexity over residues 57 to 70 (NTTSANTSSLSLGS) and 95 to 119 (DSGSGDIDDSQQSHNNNNNESNPES). Positions 144–155 (HQGDDSDNEKQY) are enriched in basic and acidic residues. Composition is skewed to polar residues over residues 169–191 (DSYSLGTLESPGTLNALETNNVS), 201–218 (TSSLEDLSLSLQHQNENA), and 231–240 (PTSKTSSFHD). Over residues 242 to 251 (SSVISSSTSV) the composition is skewed to low complexity. 2 stretches are compositionally biased toward polar residues: residues 256 to 271 (SNPTSTRGSHLSSYKS) and 305 to 324 (DTLSSATNSPNLLRNDTLQG). Composition is skewed to low complexity over residues 343–375 (NTSATSRNTSGTSTSTVVKNSRSGTSKSTSTST) and 433–462 (KVRGVFSSMFGKNKSTSSSSSSNSGSNSHS). The CRIB domain occupies 469–482 (ISTPFNAKHLAHVG). 2 disordered regions span residues 539–825 (FHFD…ALAD) and 861–913 (LREK…KQAA). Over residues 544 to 555 (NKSSSSGWSNEN) the composition is skewed to polar residues. The span at 564–575 (SNSGSGSGGGGA) shows a compositional bias: gly residues. Polar residues predominate over residues 598–607 (ITPSQSMPTK). The segment covering 608 to 622 (TESKQSENQHPHEDN) has biased composition (basic and acidic residues). Polar residues predominate over residues 623-636 (ATQYTPRTPTSHVQ). Low complexity-rich tracts occupy residues 664-677 (PSSQSLPRSDSQSD), 690-704 (SPSKIKIRSISSKSL), and 730-743 (SIPKSKSHSASLSS). The segment covering 744–755 (QLRPATNGSTTA) has biased composition (polar residues). Positions 783–801 (APPPPPSAPPAPPVPPAPP) are enriched in pro residues. Over residues 805–820 (LSEQTSEIPQQRTAPS) the composition is skewed to polar residues. Residues 861–870 (LREKNERQNR) are compositionally biased toward basic and acidic residues. Residues 871 to 886 (QQETGQNNADTASGGS) show a composition bias toward polar residues. The Protein kinase domain occupies 947-1199 (YVDLVKIGQG…ADELLHDNFI (253 aa)). Residues 953-961 (IGQGASGGV) and Lys-977 contribute to the ATP site. The active-site Proton acceptor is Asp-1067.

This sequence belongs to the protein kinase superfamily. STE Ser/Thr protein kinase family. STE20 subfamily.

It is found in the cytoplasm. Its subcellular location is the nucleus. The enzyme catalyses L-seryl-[protein] + ATP = O-phospho-L-seryl-[protein] + ADP + H(+). It catalyses the reaction L-threonyl-[protein] + ATP = O-phospho-L-threonyl-[protein] + ADP + H(+). MAP4K component of the MAPK pathway required for the mating pheromone response, and the regulation of cell polarity and cell cycle. Phosphorylates histone H2B to form H2BS10ph. Required for hyphal formation and virulence. This chain is Serine/threonine-protein kinase CST20 (CST20), found in Candida albicans (strain WO-1) (Yeast).